The primary structure comprises 401 residues: Dihydrolipoyllysine-residue succinyltransferase component of 2-oxoglutarate dehydrogenase complex (401 aa).

A Lipoyl-binding domain is found at 2-77 (SVKIIVPSLG…AVGEEIGEIN (76 aa)). Residue K43 is modified to N6-lipoyllysine. Residues 115-152 (ILAPSVQKLVTENKLDPNNIKGTGRDGRITKGDVLETI) form the Peripheral subunit-binding (PSBD) domain. Active-site residues include H372 and D376.

It belongs to the 2-oxoacid dehydrogenase family. Forms a 24-polypeptide structural core with octahedral symmetry. Part of the 2-oxoglutarate dehydrogenase (OGDH) complex composed of E1 (2-oxoglutarate dehydrogenase), E2 (dihydrolipoamide succinyltransferase) and E3 (dihydrolipoamide dehydrogenase); the complex contains multiple copies of the three enzymatic components (E1, E2 and E3). (R)-lipoate is required as a cofactor.

It catalyses the reaction N(6)-[(R)-dihydrolipoyl]-L-lysyl-[protein] + succinyl-CoA = N(6)-[(R)-S(8)-succinyldihydrolipoyl]-L-lysyl-[protein] + CoA. The protein operates within amino-acid degradation; L-lysine degradation via saccharopine pathway; glutaryl-CoA from L-lysine: step 6/6. Its function is as follows. E2 component of the 2-oxoglutarate dehydrogenase (OGDH) complex which catalyzes the second step in the conversion of 2-oxoglutarate to succinyl-CoA and CO(2). This chain is Dihydrolipoyllysine-residue succinyltransferase component of 2-oxoglutarate dehydrogenase complex (sucB), found in Rickettsia felis (strain ATCC VR-1525 / URRWXCal2) (Rickettsia azadi).